A 276-amino-acid chain; its full sequence is 2,3,4,5-tetrahydropyridine-2,6-dicarboxylate N-succinyltransferase (276 aa).

Residues arginine 100 and aspartate 137 each coordinate substrate.

Belongs to the transferase hexapeptide repeat family. In terms of assembly, homotrimer.

It localises to the cytoplasm. The enzyme catalyses (S)-2,3,4,5-tetrahydrodipicolinate + succinyl-CoA + H2O = (S)-2-succinylamino-6-oxoheptanedioate + CoA. It participates in amino-acid biosynthesis; L-lysine biosynthesis via DAP pathway; LL-2,6-diaminopimelate from (S)-tetrahydrodipicolinate (succinylase route): step 1/3. The sequence is that of 2,3,4,5-tetrahydropyridine-2,6-dicarboxylate N-succinyltransferase from Zymomonas mobilis subsp. mobilis (strain ATCC 31821 / ZM4 / CP4).